The following is a 256-amino-acid chain: Pimeloyl-[acyl-carrier protein] methyl ester esterase (256 aa).

Positions 15–242 constitute an AB hydrolase-1 domain; sequence HLVLLHGWGL…AAHAPFISHP (228 aa). Substrate is bound by residues tryptophan 22, 82 to 83, and 143 to 147; these read SL and FLALQ. The Nucleophile role is filled by serine 82. Active-site residues include aspartate 207 and histidine 235. Histidine 235 lines the substrate pocket.

It belongs to the AB hydrolase superfamily. Carboxylesterase BioH family. Monomer.

It is found in the cytoplasm. The enzyme catalyses 6-carboxyhexanoyl-[ACP] methyl ester + H2O = 6-carboxyhexanoyl-[ACP] + methanol + H(+). Its pathway is cofactor biosynthesis; biotin biosynthesis. In terms of biological role, the physiological role of BioH is to remove the methyl group introduced by BioC when the pimeloyl moiety is complete. It allows to synthesize pimeloyl-ACP via the fatty acid synthetic pathway through the hydrolysis of the ester bonds of pimeloyl-ACP esters. This is Pimeloyl-[acyl-carrier protein] methyl ester esterase from Escherichia coli O17:K52:H18 (strain UMN026 / ExPEC).